We begin with the raw amino-acid sequence, 466 residues long: Adenosylhomocysteinase (466 aa).

Residues Thr57, Asp132, and Glu192 each contribute to the substrate site. An NAD(+)-binding site is contributed by 193-195; that stretch reads TTT. The substrate site is built by Lys222 and Asp226. NAD(+) is bound by residues Asn227, 256–261, Glu279, Asn314, 335–337, and Asn380; these read GYGDVG and IGH.

This sequence belongs to the adenosylhomocysteinase family. It depends on NAD(+) as a cofactor.

It localises to the cytoplasm. The enzyme catalyses S-adenosyl-L-homocysteine + H2O = L-homocysteine + adenosine. Its pathway is amino-acid biosynthesis; L-homocysteine biosynthesis; L-homocysteine from S-adenosyl-L-homocysteine: step 1/1. In terms of biological role, may play a key role in the regulation of the intracellular concentration of adenosylhomocysteine. The protein is Adenosylhomocysteinase of Mesorhizobium japonicum (strain LMG 29417 / CECT 9101 / MAFF 303099) (Mesorhizobium loti (strain MAFF 303099)).